Reading from the N-terminus, the 59-residue chain is UPF0391 membrane protein lpp2589 (59 aa).

A run of 2 helical transmembrane segments spans residues 5–25 (ALIFFIIAIIAAAFGFGGIAV) and 30–50 (IAKILFFLFLVMFVIFLIMGL).

Belongs to the UPF0391 family.

Its subcellular location is the cell membrane. The polypeptide is UPF0391 membrane protein lpp2589 (Legionella pneumophila (strain Paris)).